A 56-amino-acid chain; its full sequence is Preprotein translocase subunit SecG (56 aa).

Topologically, residues 1-29 (MAKEKATLPPTGAGLMRFFDEDTKAVKIS) are cytoplasmic. A helical transmembrane segment spans residues 30 to 51 (PRGVIALTLILVALEILLHAFG). Topologically, residues 52-56 (PQIFG) are extracellular.

The protein belongs to the SEC61-beta family. As to quaternary structure, component of the protein translocase complex. Heterotrimer consisting of alpha (SecY), beta (SecG) and gamma (SecE) subunits. Can form oligomers of the heterotrimer.

It localises to the cell membrane. Functionally, involved in protein export. The function of the beta subunit is unknown, but it may be involved in stabilization of the trimeric complex. In Thermococcus onnurineus (strain NA1), this protein is Preprotein translocase subunit SecG.